A 616-amino-acid chain; its full sequence is RNA-directed RNA polymerase (616 aa).

The catalysed reaction is RNA(n) + a ribonucleoside 5'-triphosphate = RNA(n+1) + diphosphate. Its function is as follows. RNA-dependent RNA polymerase which replicates the viral genome. The sequence is that of RNA-directed RNA polymerase from White clover cryptic virus 1 (isolate Boccardo/2004) (WCCV-1).